A 163-amino-acid polypeptide reads, in one-letter code: Shikimate kinase (163 aa).

10 to 15 provides a ligand contact to ATP; it reads GVGKSS. Ser14 lines the Mg(2+) pocket. Substrate is bound by residues Asp28, Arg52, and Gly75. Position 116 (Arg116) interacts with ATP. A substrate-binding site is contributed by Arg134. Residue Arg151 coordinates ATP.

This sequence belongs to the shikimate kinase family. As to quaternary structure, monomer. Requires Mg(2+) as cofactor.

Its subcellular location is the cytoplasm. It carries out the reaction shikimate + ATP = 3-phosphoshikimate + ADP + H(+). It functions in the pathway metabolic intermediate biosynthesis; chorismate biosynthesis; chorismate from D-erythrose 4-phosphate and phosphoenolpyruvate: step 5/7. Catalyzes the specific phosphorylation of the 3-hydroxyl group of shikimic acid using ATP as a cosubstrate. In Streptococcus thermophilus (strain ATCC BAA-491 / LMD-9), this protein is Shikimate kinase.